The following is a 252-amino-acid chain: 5'-nucleotidase SurE (252 aa).

A divalent metal cation is bound by residues Asp-8, Asp-9, Ser-39, and Asn-95.

This sequence belongs to the SurE nucleotidase family. A divalent metal cation is required as a cofactor.

Its subcellular location is the cytoplasm. It carries out the reaction a ribonucleoside 5'-phosphate + H2O = a ribonucleoside + phosphate. Nucleotidase that shows phosphatase activity on nucleoside 5'-monophosphates. This is 5'-nucleotidase SurE from Clostridium botulinum (strain Okra / Type B1).